A 104-amino-acid chain; its full sequence is Large ribosomal subunit protein uL24 (104 aa).

This sequence belongs to the universal ribosomal protein uL24 family. Part of the 50S ribosomal subunit.

In terms of biological role, one of two assembly initiator proteins, it binds directly to the 5'-end of the 23S rRNA, where it nucleates assembly of the 50S subunit. Functionally, one of the proteins that surrounds the polypeptide exit tunnel on the outside of the subunit. In Anaplasma phagocytophilum (strain HZ), this protein is Large ribosomal subunit protein uL24.